The sequence spans 117 residues: MSELASQQCEACRADAPKVSEQELSELMHLIPDWQPLVVKGELQLRREFTFRNFKEALAFTNRLGELAEAEFHHPAILTEWGKVTVSWWTHKIGGLHRNDFIMAARTDQLLSDPLHK.

Belongs to the pterin-4-alpha-carbinolamine dehydratase family.

The enzyme catalyses (4aS,6R)-4a-hydroxy-L-erythro-5,6,7,8-tetrahydrobiopterin = (6R)-L-erythro-6,7-dihydrobiopterin + H2O. The chain is Putative pterin-4-alpha-carbinolamine dehydratase from Aeromonas salmonicida (strain A449).